Here is a 319-residue protein sequence, read N- to C-terminus: Methionyl-tRNA formyltransferase (319 aa).

Ser116 to Pro119 contacts (6S)-5,6,7,8-tetrahydrofolate.

Belongs to the Fmt family.

The catalysed reaction is L-methionyl-tRNA(fMet) + (6R)-10-formyltetrahydrofolate = N-formyl-L-methionyl-tRNA(fMet) + (6S)-5,6,7,8-tetrahydrofolate + H(+). In terms of biological role, attaches a formyl group to the free amino group of methionyl-tRNA(fMet). The formyl group appears to play a dual role in the initiator identity of N-formylmethionyl-tRNA by promoting its recognition by IF2 and preventing the misappropriation of this tRNA by the elongation apparatus. The chain is Methionyl-tRNA formyltransferase from Treponema pallidum (strain Nichols).